We begin with the raw amino-acid sequence, 262 residues long: Flap endonuclease Xni (262 aa).

A Mg(2+)-binding site is contributed by Asp-105. The 93-residue stretch at 162–254 folds into the 5'-3' exonuclease domain; sequence ERSQFLDLMA…LKDFRVIDSL (93 aa). K(+) contacts are provided by Leu-172, Ala-173, Pro-181, Ile-183, and Ile-186. Positions 185–190 are interaction with DNA; it reads GIGPKS.

This sequence belongs to the Xni family. It depends on Mg(2+) as a cofactor. K(+) is required as a cofactor.

Functionally, has flap endonuclease activity. During DNA replication, flap endonucleases cleave the 5'-overhanging flap structure that is generated by displacement synthesis when DNA polymerase encounters the 5'-end of a downstream Okazaki fragment. In Shewanella baltica (strain OS195), this protein is Flap endonuclease Xni.